A 310-amino-acid polypeptide reads, in one-letter code: tRNA uridine(34) hydroxylase (310 aa).

One can recognise a Rhodanese domain in the interval 124 to 218 (SDPEVLLIDT…YFEEVPQEES (95 aa)). Cys178 functions as the Cysteine persulfide intermediate in the catalytic mechanism.

This sequence belongs to the TrhO family.

It catalyses the reaction uridine(34) in tRNA + AH2 + O2 = 5-hydroxyuridine(34) in tRNA + A + H2O. Catalyzes oxygen-dependent 5-hydroxyuridine (ho5U) modification at position 34 in tRNAs. This Pseudomonas putida (strain ATCC 700007 / DSM 6899 / JCM 31910 / BCRC 17059 / LMG 24140 / F1) protein is tRNA uridine(34) hydroxylase.